A 258-amino-acid chain; its full sequence is Fibroblast growth factor-binding protein 3 (258 aa).

An N-terminal signal peptide occupies residues 1-26; the sequence is MTPPKLRASLSPSLLLLLSGCLLAAA. 2 cysteine pairs are disulfide-bonded: C59–C80 and C90–C124. Positions 146 to 231 are disordered; that stretch reads RLVPRASPPA…GTGPDPDGLD (86 aa). The segment covering 186–197 has biased composition (pro residues); that stretch reads GTPPPQSAPPKE. Residues 198 to 209 show a composition bias toward basic and acidic residues; it reads NPSERKTNEGKR. The cysteines at positions 241 and 249 are disulfide-linked.

Belongs to the fibroblast growth factor-binding protein family. Interacts with FGF2.

It localises to the secreted. Functionally, heparin-binding protein which binds to FGF2, prevents binding of FGF2 to heparin and probably inhibits immobilization of FGF2 on extracellular matrix glycosaminoglycans, allowing its release and subsequent activation of FGFR signaling which leads to increased vascular permeability. This Homo sapiens (Human) protein is Fibroblast growth factor-binding protein 3 (FGFBP3).